A 187-amino-acid polypeptide reads, in one-letter code: Aminodeoxychorismate synthase component 2 (187 aa).

Positions 1–187 (MILLIDNYDS…HQLLANFLHR (187 aa)) constitute a Glutamine amidotransferase type-1 domain. Residues Cys-79, His-168, and Glu-170 contribute to the active site.

As to quaternary structure, monomer. Heterodimer consisting of two non-identical subunits: a glutamine amidotransferase subunit (PabA) and a aminodeoxychorismate synthase subunit (PabB).

It catalyses the reaction chorismate + L-glutamine = 4-amino-4-deoxychorismate + L-glutamate. Its pathway is cofactor biosynthesis; tetrahydrofolate biosynthesis; 4-aminobenzoate from chorismate: step 1/2. Inhibited by 6-diazo-5-oxo-L-norleucine (DON). The inhibition is competitive with glutamine, but uncompetitive with chorismate. Functionally, part of a heterodimeric complex that catalyzes the two-step biosynthesis of 4-amino-4-deoxychorismate (ADC), a precursor of p-aminobenzoate (PABA) and tetrahydrofolate. In the first step, a glutamine amidotransferase (PabA) generates ammonia as a substrate that, along with chorismate, is used in the second step, catalyzed by aminodeoxychorismate synthase (PabB) to produce ADC. PabA converts glutamine into glutamate only in the presence of stoichiometric amounts of PabB. This is Aminodeoxychorismate synthase component 2 from Escherichia coli (strain K12).